The sequence spans 193 residues: CASP-like protein 2U1 (193 aa).

Residues 1-18 (MAMALALGGGQDAERKVK) are Cytoplasmic-facing. The chain crosses the membrane as a helical span at residues 19–39 (VAEVALRALLCGLGALAAALV). At 40–61 (ATDTQTRTFFSLQKKASYTDMK) the chain is on the extracellular side. Residues 62–82 (AMVFLVDAAAVAAGYSLLQLA) form a helical membrane-spanning segment. Over 83–113 (ARCCGGGAMSSGRGDGGGRGRALSWCVFSCD) the chain is Cytoplasmic. A helical transmembrane segment spans residues 114 to 134 (QALAYVLLAAVAAALQASVVA). Residues 135–156 (KRGQPELQWMGICALYGAFCRQ) lie on the Extracellular side of the membrane. The helical transmembrane segment at 157–177 (AGAGLATAVVAGLAAVLLAFL) threads the bilayer. Residues 178 to 193 (SAFNLFRLYGSGGTKS) lie on the Cytoplasmic side of the membrane.

Belongs to the Casparian strip membrane proteins (CASP) family. As to quaternary structure, homodimer and heterodimers.

It is found in the cell membrane. In Sorghum bicolor (Sorghum), this protein is CASP-like protein 2U1.